The chain runs to 198 residues: Formate-dependent nitrite reductase complex subunit NrfG (198 aa).

2 TPR repeats span residues 73-106 and 144-177; these read SEQW…RGEN and ITAL…NSPR.

Its function is as follows. Required for formate-dependent nitrite reduction. Not required for the biosynthesis of any of the c-type cytochromes nor for the secretion of the periplasmic cytochromes. The polypeptide is Formate-dependent nitrite reductase complex subunit NrfG (nrfG) (Escherichia coli O157:H7).